The primary structure comprises 500 residues: Probable cytosol aminopeptidase (500 aa).

Mn(2+)-binding residues include K264 and D269. K276 is a catalytic residue. 3 residues coordinate Mn(2+): D287, D346, and E348. The active site involves R350.

It belongs to the peptidase M17 family. Requires Mn(2+) as cofactor.

It is found in the cytoplasm. The enzyme catalyses Release of an N-terminal amino acid, Xaa-|-Yaa-, in which Xaa is preferably Leu, but may be other amino acids including Pro although not Arg or Lys, and Yaa may be Pro. Amino acid amides and methyl esters are also readily hydrolyzed, but rates on arylamides are exceedingly low.. The catalysed reaction is Release of an N-terminal amino acid, preferentially leucine, but not glutamic or aspartic acids.. Presumably involved in the processing and regular turnover of intracellular proteins. Catalyzes the removal of unsubstituted N-terminal amino acids from various peptides. The protein is Probable cytosol aminopeptidase of Rhodopseudomonas palustris (strain TIE-1).